We begin with the raw amino-acid sequence, 156 residues long: uncharacterized protein (156 aa).

The protein resides in the mitochondrion. This is an uncharacterized protein from Paramecium tetraurelia.